A 388-amino-acid polypeptide reads, in one-letter code: Chorismate synthase (388 aa).

Positions 39 and 45 each coordinate NADP(+). FMN is bound by residues 130 to 132 (RSS), 251 to 252 (NA), Gly-296, 311 to 315 (KPIPT), and Arg-337.

Belongs to the chorismate synthase family. Homotetramer. The cofactor is FMNH2.

The catalysed reaction is 5-O-(1-carboxyvinyl)-3-phosphoshikimate = chorismate + phosphate. It participates in metabolic intermediate biosynthesis; chorismate biosynthesis; chorismate from D-erythrose 4-phosphate and phosphoenolpyruvate: step 7/7. In terms of biological role, catalyzes the anti-1,4-elimination of the C-3 phosphate and the C-6 proR hydrogen from 5-enolpyruvylshikimate-3-phosphate (EPSP) to yield chorismate, which is the branch point compound that serves as the starting substrate for the three terminal pathways of aromatic amino acid biosynthesis. This reaction introduces a second double bond into the aromatic ring system. The chain is Chorismate synthase from Lactococcus lactis subsp. lactis (strain IL1403) (Streptococcus lactis).